The sequence spans 116 residues: Ferredoxin-like protein in nif region (116 aa).

Positions 2–29 constitute a 4Fe-4S ferredoxin-type domain; that stretch reads AYTITSQCISCKLCSSVCPTGAIKIAEN. Residues Cys9, Cys12, Cys15, and Cys19 each coordinate iron-sulfur cluster.

The sequence is that of Ferredoxin-like protein in nif region (fdxN) from Nostoc sp. (strain PCC 7120 / SAG 25.82 / UTEX 2576).